The following is a 139-amino-acid chain: Chemical-damaging agent resistance protein B (139 aa).

It belongs to the CAPAB/TerDEXZ family.

In terms of biological role, not known; could confer methyl methane sulfonate (MMS), mitomycin C (MC), and UV resistance. The sequence is that of Chemical-damaging agent resistance protein B from Clostridium acetobutylicum.